Here is a 291-residue protein sequence, read N- to C-terminus: NAD kinase (291 aa).

Residue Asp-55 is the Proton acceptor of the active site. NAD(+)-binding positions include 55 to 56, Arg-60, 130 to 131, Asp-160, and 171 to 176; these read DG, NE, and TAYAFS.

It belongs to the NAD kinase family. A divalent metal cation is required as a cofactor.

Its subcellular location is the cytoplasm. It catalyses the reaction NAD(+) + ATP = ADP + NADP(+) + H(+). Functionally, involved in the regulation of the intracellular balance of NAD and NADP, and is a key enzyme in the biosynthesis of NADP. Catalyzes specifically the phosphorylation on 2'-hydroxyl of the adenosine moiety of NAD to yield NADP. The protein is NAD kinase of Corynebacterium glutamicum (strain ATCC 13032 / DSM 20300 / JCM 1318 / BCRC 11384 / CCUG 27702 / LMG 3730 / NBRC 12168 / NCIMB 10025 / NRRL B-2784 / 534).